Reading from the N-terminus, the 153-residue chain is Putative transcription factor YdeB (153 aa).

The protein belongs to the CarD family.

The sequence is that of Putative transcription factor YdeB (ydeB) from Bacillus subtilis (strain 168).